The primary structure comprises 382 residues: ATP phosphoribosyltransferase regulatory subunit (382 aa).

Belongs to the class-II aminoacyl-tRNA synthetase family. HisZ subfamily. Heteromultimer composed of HisG and HisZ subunits.

It localises to the cytoplasm. It participates in amino-acid biosynthesis; L-histidine biosynthesis; L-histidine from 5-phospho-alpha-D-ribose 1-diphosphate: step 1/9. In terms of biological role, required for the first step of histidine biosynthesis. May allow the feedback regulation of ATP phosphoribosyltransferase activity by histidine. The chain is ATP phosphoribosyltransferase regulatory subunit from Burkholderia cenocepacia (strain HI2424).